Reading from the N-terminus, the 213-residue chain is Imidazole glycerol phosphate synthase subunit HisH (213 aa).

Residues 4–211 (NLGVIDYGMG…LHWLHQGAEP (208 aa)) form the Glutamine amidotransferase type-1 domain. Cysteine 82 acts as the Nucleophile in catalysis. Catalysis depends on residues histidine 186 and glutamate 188.

Heterodimer of HisH and HisF.

The protein resides in the cytoplasm. It carries out the reaction 5-[(5-phospho-1-deoxy-D-ribulos-1-ylimino)methylamino]-1-(5-phospho-beta-D-ribosyl)imidazole-4-carboxamide + L-glutamine = D-erythro-1-(imidazol-4-yl)glycerol 3-phosphate + 5-amino-1-(5-phospho-beta-D-ribosyl)imidazole-4-carboxamide + L-glutamate + H(+). It catalyses the reaction L-glutamine + H2O = L-glutamate + NH4(+). It functions in the pathway amino-acid biosynthesis; L-histidine biosynthesis; L-histidine from 5-phospho-alpha-D-ribose 1-diphosphate: step 5/9. Functionally, IGPS catalyzes the conversion of PRFAR and glutamine to IGP, AICAR and glutamate. The HisH subunit catalyzes the hydrolysis of glutamine to glutamate and ammonia as part of the synthesis of IGP and AICAR. The resulting ammonia molecule is channeled to the active site of HisF. The polypeptide is Imidazole glycerol phosphate synthase subunit HisH (Synechococcus sp. (strain CC9902)).